The primary structure comprises 64 residues: Crotamine CRO3 (64 aa).

An N-terminal signal peptide occupies residues 1–22; the sequence is MILYLLFAFLFLAFLSEPGNAY. 3 disulfides stabilise this stretch: Cys25-Cys57, Cys32-Cys51, and Cys39-Cys58.

Belongs to the crotamine-myotoxin family. In terms of assembly, monomer. As to expression, expressed by the venom gland.

It localises to the secreted. Functionally, cationic peptide that possesses multiple functions. It acts as a cell-penetrating peptide (CPP), and as a potent voltage-gated potassium channel (Kv) inhibitor. It exhibits antimicrobial activities, hind limb paralysis, and severe muscle necrosis by a non-enzymatic mechanism. In Crotalus durissus terrificus (South American rattlesnake), this protein is Crotamine CRO3 (CRO3).